A 1645-amino-acid polypeptide reads, in one-letter code: Histone-lysine N-methyltransferase set-26 (1645 aa).

5 disordered regions span residues 1-82 (MADG…QQIP), 109-132 (EPAAAADSRPLTEEEQLAAERPTE), 200-228 (DAVGPGSPGTQYRRNQQTGGGLPSTSVAP), 417-606 (TPEQ…VLRP), and 651-789 (TGQS…DEAA). 2 stretches are compositionally biased toward low complexity: residues 16-31 (EQPPLQQQQPEIAEPI) and 67-82 (QEFYQEPQIPEPQQIP). A compositionally biased stretch (polar residues) spans 207 to 228 (PGTQYRRNQQTGGGLPSTSVAP). Composition is skewed to low complexity over residues 429–443 (RQRAAPQFPAAAAQR) and 453–467 (RPGASSSRAPRPSMA). The segment covering 559–578 (MTQEEKNAHFARLTTDKEKP) has biased composition (basic and acidic residues). Positions 592–603 (PHVPPPPPPPLV) are enriched in pro residues. The span at 651-675 (TGQSGSSAAARQRTVSGSAARAQTY) shows a compositional bias: polar residues. Composition is skewed to basic residues over residues 684–699 (QHHHQMPMDQRKRHSS) and 731–741 (HRPRGRPKGTR). Positions 780–789 (SESEGIDEAA) are enriched in acidic residues. The segment at 794 to 842 (TMRCHCGMDHGDGDTIECEGCKTWQHMACMGLTLKSNTSKYKCEMCLPR) adopts a PHD-type zinc-finger fold. Positions 865–904 (AAKKQKRKSEPVEQKQKSQPSTSRKSAPMALQQQPAEPRV) are disordered. Residues 881–899 (KSQPSTSRKSAPMALQQQP) show a composition bias toward polar residues. Residues 973–1064 (MSNEVKRQPG…RNTEVTLPFD (92 aa)) form the SET domain. The span at 1099–1172 (RHRAMDHKKR…EAKERKKMEV (74 aa)) shows a compositional bias: basic and acidic residues. Disordered stretches follow at residues 1099 to 1333 (RHRA…SKNV), 1371 to 1536 (SGLL…STEG), and 1548 to 1645 (PLDD…TRWN). Residues 1103 to 1217 (MDHKKREAEE…GKRKEARRRS (115 aa)) are a coiled coil. Positions 1173–1183 (EASAAAAPESS) are enriched in low complexity. The span at 1188–1210 (AREERRIQQAEEMFRRQEEEGKR) shows a compositional bias: basic and acidic residues. Composition is skewed to polar residues over residues 1258 to 1268 (TTQPSTSSFAT) and 1300 to 1311 (TVATPKDTTASN). 3 stretches are compositionally biased toward basic and acidic residues: residues 1382 to 1427 (SEVR…KKAN), 1434 to 1450 (KSEKAVEKAVEKVEKKP), and 1468 to 1485 (KKTEEVDGIEREASESSS). A compositionally biased stretch (polar residues) spans 1554-1565 (SSSNTAPTTTIA).

This sequence belongs to the class V-like SAM-binding methyltransferase superfamily. As to expression, expressed both in the germline and in somatic tissues.

The protein resides in the nucleus. It carries out the reaction L-lysyl(9)-[histone H3] + 3 S-adenosyl-L-methionine = N(6),N(6),N(6)-trimethyl-L-lysyl(9)-[histone H3] + 3 S-adenosyl-L-homocysteine + 3 H(+). In terms of biological role, histone methyltransferase that mediates trimethylation of 'Lys-9' of histone H3 in vitro. Involved in transcriptional regulation. Plays a role in the negative regulation of lifespan and in heat resistance. Together with set-9, negatively regulates lifespan in a germline-independent, partially daf-16-dependent fashion. Together with set-9, plays a role in germline development and maintenance and might play a role in the restriction of the trimethylation mark on histone H3 'Lys-4'(H3K4me3) to target genes specifically in the germline. Together with spr-5, required for transgenerational fertility. This chain is Histone-lysine N-methyltransferase set-26, found in Caenorhabditis elegans.